A 360-amino-acid chain; its full sequence is Phospho-N-acetylmuramoyl-pentapeptide-transferase (360 aa).

10 helical membrane passes run 27-47, 73-93, 94-114, 132-152, 168-188, 199-219, 236-256, 263-283, 288-308, and 338-358; these read ILSI…LIAW, TMGG…WADL, TNPY…VGFV, WKYF…YAYG, VMPQ…VGTS, GLAI…AWAT, ASEL…FLWF, VFMG…IAVL, FLLV…ILQV, and VIVR…ATLK.

The protein belongs to the glycosyltransferase 4 family. MraY subfamily. Requires Mg(2+) as cofactor.

It localises to the cell inner membrane. It carries out the reaction UDP-N-acetyl-alpha-D-muramoyl-L-alanyl-gamma-D-glutamyl-meso-2,6-diaminopimeloyl-D-alanyl-D-alanine + di-trans,octa-cis-undecaprenyl phosphate = di-trans,octa-cis-undecaprenyl diphospho-N-acetyl-alpha-D-muramoyl-L-alanyl-D-glutamyl-meso-2,6-diaminopimeloyl-D-alanyl-D-alanine + UMP. Its pathway is cell wall biogenesis; peptidoglycan biosynthesis. Functionally, catalyzes the initial step of the lipid cycle reactions in the biosynthesis of the cell wall peptidoglycan: transfers peptidoglycan precursor phospho-MurNAc-pentapeptide from UDP-MurNAc-pentapeptide onto the lipid carrier undecaprenyl phosphate, yielding undecaprenyl-pyrophosphoryl-MurNAc-pentapeptide, known as lipid I. In Aliivibrio fischeri (strain MJ11) (Vibrio fischeri), this protein is Phospho-N-acetylmuramoyl-pentapeptide-transferase.